Consider the following 336-residue polypeptide: Glyceraldehyde-3-phosphate dehydrogenase 1 (336 aa).

Residues 12–13 (RI), D34, and S120 each bind NAD(+). D-glyceraldehyde 3-phosphate is bound by residues 150–152 (SCT), T181, R198, 211–212 (TG), and R234. The active-site Nucleophile is C151. Position 316 (N316) interacts with NAD(+).

It belongs to the glyceraldehyde-3-phosphate dehydrogenase family. As to quaternary structure, homotetramer.

The protein localises to the cytoplasm. The catalysed reaction is D-glyceraldehyde 3-phosphate + phosphate + NAD(+) = (2R)-3-phospho-glyceroyl phosphate + NADH + H(+). The protein operates within carbohydrate degradation; glycolysis; pyruvate from D-glyceraldehyde 3-phosphate: step 1/5. Its function is as follows. Catalyzes the oxidative phosphorylation of glyceraldehyde 3-phosphate (G3P) to 1,3-bisphosphoglycerate (BPG) using the cofactor NAD. The first reaction step involves the formation of a hemiacetal intermediate between G3P and a cysteine residue, and this hemiacetal intermediate is then oxidized to a thioester, with concomitant reduction of NAD to NADH. The reduced NADH is then exchanged with the second NAD, and the thioester is attacked by a nucleophilic inorganic phosphate to produce BPG. This is Glyceraldehyde-3-phosphate dehydrogenase 1 (gapA1) from Staphylococcus epidermidis (strain ATCC 35984 / DSM 28319 / BCRC 17069 / CCUG 31568 / BM 3577 / RP62A).